An 89-amino-acid polypeptide reads, in one-letter code: Small ribosomal subunit protein uS15 (89 aa).

The protein belongs to the universal ribosomal protein uS15 family. As to quaternary structure, part of the 30S ribosomal subunit. Forms a bridge to the 50S subunit in the 70S ribosome, contacting the 23S rRNA.

In terms of biological role, one of the primary rRNA binding proteins, it binds directly to 16S rRNA where it helps nucleate assembly of the platform of the 30S subunit by binding and bridging several RNA helices of the 16S rRNA. Its function is as follows. Forms an intersubunit bridge (bridge B4) with the 23S rRNA of the 50S subunit in the ribosome. This chain is Small ribosomal subunit protein uS15, found in Buchnera aphidicola subsp. Acyrthosiphon pisum (strain 5A).